The chain runs to 307 residues: MDIETFLAGERAAGGYRCGFVAIVGRPNVGKSTLMNHLIGQKISITSKKAQTTRNRVTGIYTDDTAQFVFVDTPGFQTDHRNALNDRLNQNVTEALGGVDVVVFVVEAMRFTDADRVVLKQLPKHTPVILVVNKIDKDKAKDRYALEAFVAQVRAEFEFAAAEAVSAKHGLRIANLLELIKPYLPESVPMYPEDMVTDKSARFLAMEIVREKLFRYLGEELPYAMNVEVEQFEEEDGLNRIYIAVLVDKESQKAILIGKGGERLKKISTEARLDMEKLFDTKVFLKVWVKVKSGWADDIRFLRELGL.

The Era-type G domain occupies 17-186; it reads RCGFVAIVGR…LELIKPYLPE (170 aa). A G1 region spans residues 25-32; it reads GRPNVGKS. 25–32 is a binding site for GTP; that stretch reads GRPNVGKS. The tract at residues 51–55 is G2; the sequence is QTTRN. A G3 region spans residues 72 to 75; it reads DTPG. GTP is bound by residues 72 to 76 and 133 to 136; these read DTPGF and NKID. Positions 133-136 are G4; sequence NKID. The interval 165 to 167 is G5; that stretch reads VSA. Residues 217 to 293 form the KH type-2 domain; it reads LGEELPYAMN…FLKVWVKVKS (77 aa).

This sequence belongs to the TRAFAC class TrmE-Era-EngA-EngB-Septin-like GTPase superfamily. Era GTPase family. Monomer.

The protein resides in the cytoplasm. Its subcellular location is the cell inner membrane. In terms of biological role, an essential GTPase that binds both GDP and GTP, with rapid nucleotide exchange. Plays a role in 16S rRNA processing and 30S ribosomal subunit biogenesis and possibly also in cell cycle regulation and energy metabolism. The polypeptide is GTPase Era (Neisseria meningitidis serogroup B (strain ATCC BAA-335 / MC58)).